The chain runs to 489 residues: Putative ABC transporter ATP-binding protein TDE_0282 (489 aa).

ABC transporter domains follow at residues 2–241 and 269–487; these read ITLR…SMKL and FAVK…MQLE. ATP contacts are provided by residues 36–43 and 301–308; these read GASGCGKT and GENGAGKT.

It belongs to the ABC transporter superfamily.

The protein resides in the cell inner membrane. In terms of biological role, probably part of an ABC transporter complex. Responsible for energy coupling to the transport system. The polypeptide is Putative ABC transporter ATP-binding protein TDE_0282 (Treponema denticola (strain ATCC 35405 / DSM 14222 / CIP 103919 / JCM 8153 / KCTC 15104)).